The sequence spans 444 residues: MTLDLSKPATAGYLSGFANEFATEALPGALPHGRNSPQRAPYGLYAEQLSGTAFTAPRGHNRRSWLYRIRPAAVHRPFEPYAGAQRLVSEFGDSADVPPTPPNQLRWDPLPMPVEPTDFVDGLVTMAGNGSAAAMNGCAIHLYAANRSMQDRFFYSADGELLIVPQQGRLFIATEFGRLDVEPFEIAVIPRGVRFAVALPDGNARGYICENFGALLRLPDLGPIGSNGLANPRDFLTPQAAYEDREGAFELIAKLNGRLWRADIGHSPLDVVAWHGNYAPYKYDLRLFNTIGSISFDHPDPSIFLVLQAQSDTPGVDTIDFVIFPPRWLAAEDTFRPPWFHRNVASEFMGLVHGAYDAKAEGFVPGGASLHNCMSGHGPDADTFEKASASDTTKPHKVDATMAFMFETRTLIRPTRYALDTAQLQADYFECWQGIKKHFNPEQR.

Residue histidine 298 is the Proton acceptor of the active site. 2 residues coordinate Fe cation: histidine 341 and glutamate 347. Tyrosine 356 and histidine 377 together coordinate homogentisate. Residue histidine 377 participates in Fe cation binding.

This sequence belongs to the homogentisate dioxygenase family. Hexamer; dimer of trimers. The cofactor is Fe cation.

The enzyme catalyses homogentisate + O2 = 4-maleylacetoacetate + H(+). It functions in the pathway amino-acid degradation; L-phenylalanine degradation; acetoacetate and fumarate from L-phenylalanine: step 4/6. Functionally, involved in the catabolism of homogentisate (2,5-dihydroxyphenylacetate or 2,5-OH-PhAc), a central intermediate in the degradation of phenylalanine and tyrosine. Catalyzes the oxidative ring cleavage of the aromatic ring of homogentisate to yield maleylacetoacetate. This Burkholderia orbicola (strain AU 1054) protein is Homogentisate 1,2-dioxygenase.